The sequence spans 307 residues: Adenosylcobinamide-GDP ribazoletransferase (307 aa).

8 helical membrane-spanning segments follow: residues proline 22–alanine 42, proline 58–isoleucine 78, glycine 80–leucine 100, phenylalanine 137–valine 157, valine 161–leucine 181, threonine 212–valine 232, alanine 248–phenylalanine 268, and cysteine 283–alanine 303.

It belongs to the CobS family. Mg(2+) is required as a cofactor.

The protein localises to the cell membrane. The enzyme catalyses alpha-ribazole + adenosylcob(III)inamide-GDP = adenosylcob(III)alamin + GMP + H(+). It carries out the reaction alpha-ribazole 5'-phosphate + adenosylcob(III)inamide-GDP = adenosylcob(III)alamin 5'-phosphate + GMP + H(+). The protein operates within cofactor biosynthesis; adenosylcobalamin biosynthesis; adenosylcobalamin from cob(II)yrinate a,c-diamide: step 7/7. In terms of biological role, joins adenosylcobinamide-GDP and alpha-ribazole to generate adenosylcobalamin (Ado-cobalamin). Also synthesizes adenosylcobalamin 5'-phosphate from adenosylcobinamide-GDP and alpha-ribazole 5'-phosphate. This chain is Adenosylcobinamide-GDP ribazoletransferase, found in Corynebacterium glutamicum (strain ATCC 13032 / DSM 20300 / JCM 1318 / BCRC 11384 / CCUG 27702 / LMG 3730 / NBRC 12168 / NCIMB 10025 / NRRL B-2784 / 534).